The primary structure comprises 197 residues: Dephospho-CoA kinase (197 aa).

The region spanning 2-197 (IVGLTGGIAS…YQQILSLNAA (196 aa)) is the DPCK domain. 10–15 (ASGKTL) contacts ATP.

Belongs to the CoaE family.

The protein localises to the cytoplasm. The enzyme catalyses 3'-dephospho-CoA + ATP = ADP + CoA + H(+). It participates in cofactor biosynthesis; coenzyme A biosynthesis; CoA from (R)-pantothenate: step 5/5. Catalyzes the phosphorylation of the 3'-hydroxyl group of dephosphocoenzyme A to form coenzyme A. In Dichelobacter nodosus (Bacteroides nodosus), this protein is Dephospho-CoA kinase.